Consider the following 290-residue polypeptide: 4-hydroxybenzoate octaprenyltransferase (290 aa).

The next 6 helical transmembrane spans lie at Trp41–Met61, Trp89–Leu109, Phe133–Phe153, Asp158–Tyr178, Phe202–Ile224, and Trp269–Gly289.

This sequence belongs to the UbiA prenyltransferase family. Mg(2+) is required as a cofactor.

It localises to the cell inner membrane. It catalyses the reaction all-trans-octaprenyl diphosphate + 4-hydroxybenzoate = 4-hydroxy-3-(all-trans-octaprenyl)benzoate + diphosphate. It functions in the pathway cofactor biosynthesis; ubiquinone biosynthesis. Catalyzes the prenylation of para-hydroxybenzoate (PHB) with an all-trans polyprenyl group. Mediates the second step in the final reaction sequence of ubiquinone-8 (UQ-8) biosynthesis, which is the condensation of the polyisoprenoid side chain with PHB, generating the first membrane-bound Q intermediate 3-octaprenyl-4-hydroxybenzoate. This is 4-hydroxybenzoate octaprenyltransferase from Burkholderia ambifaria (strain MC40-6).